The following is a 238-amino-acid chain: Demethylmenaquinone methyltransferase (238 aa).

Residues Thr60, Asp81, and 108-109 (NA) each bind S-adenosyl-L-methionine.

The protein belongs to the class I-like SAM-binding methyltransferase superfamily. MenG/UbiE family.

It catalyses the reaction a 2-demethylmenaquinol + S-adenosyl-L-methionine = a menaquinol + S-adenosyl-L-homocysteine + H(+). Its pathway is quinol/quinone metabolism; menaquinone biosynthesis; menaquinol from 1,4-dihydroxy-2-naphthoate: step 2/2. Its function is as follows. Methyltransferase required for the conversion of demethylmenaquinol (DMKH2) to menaquinol (MKH2). The polypeptide is Demethylmenaquinone methyltransferase (Oceanobacillus iheyensis (strain DSM 14371 / CIP 107618 / JCM 11309 / KCTC 3954 / HTE831)).